The chain runs to 359 residues: S-adenosylmethionine:tRNA ribosyltransferase-isomerase (359 aa).

The protein belongs to the QueA family. As to quaternary structure, monomer.

Its subcellular location is the cytoplasm. The enzyme catalyses 7-aminomethyl-7-carbaguanosine(34) in tRNA + S-adenosyl-L-methionine = epoxyqueuosine(34) in tRNA + adenine + L-methionine + 2 H(+). It functions in the pathway tRNA modification; tRNA-queuosine biosynthesis. Its function is as follows. Transfers and isomerizes the ribose moiety from AdoMet to the 7-aminomethyl group of 7-deazaguanine (preQ1-tRNA) to give epoxyqueuosine (oQ-tRNA). The chain is S-adenosylmethionine:tRNA ribosyltransferase-isomerase from Ralstonia pickettii (strain 12J).